The following is a 334-amino-acid chain: MSIEQLAETAQAMVAPGKGIIAIDESTSTIAKRFSGVGIENTEENRRAYRELLLTTPKLSDYISGAILFDETIRQKTKDGVPFAKYMADHGIIPGIKVDKGAQPLAGMPGELVTEGLDGLRARLEEYYTLGARFAKWRAVINIGEDIPSGTCIEANAHALARYAALCQEQGLVPMVEPEVIMDGDHDIETCYEVTEATLRSLFGALYEQNVVLEGTILKASMVISGKGCEEQASVEEVAESTVMCLKSTVPAILPGIVFLSGGQTDEQSTAHLNEMHQLGNLPWPLSFSYGRAMQQAALKLWSKDMTGNYAKAQQIIYERAKENGLAALGKWKG.

It belongs to the class I fructose-bisphosphate aldolase family.

The enzyme catalyses beta-D-fructose 1,6-bisphosphate = D-glyceraldehyde 3-phosphate + dihydroxyacetone phosphate. It participates in carbohydrate degradation; glycolysis; D-glyceraldehyde 3-phosphate and glycerone phosphate from D-glucose: step 4/4. In Xanthomonas campestris pv. campestris (strain ATCC 33913 / DSM 3586 / NCPPB 528 / LMG 568 / P 25), this protein is Probable fructose-bisphosphate aldolase class 1.